Reading from the N-terminus, the 201-residue chain is Small ribosomal subunit protein uS4 (201 aa).

The segment at 26–46 (LARRAYAPGDHGRDRRGKLSE) is disordered. The span at 35-44 (DHGRDRRGKL) shows a compositional bias: basic and acidic residues. Residues 93-156 (RRLDNMVYRL…KNLDIIKNAV (64 aa)) form the S4 RNA-binding domain.

This sequence belongs to the universal ribosomal protein uS4 family. As to quaternary structure, part of the 30S ribosomal subunit. Contacts protein S5. The interaction surface between S4 and S5 is involved in control of translational fidelity.

Functionally, one of the primary rRNA binding proteins, it binds directly to 16S rRNA where it nucleates assembly of the body of the 30S subunit. Its function is as follows. With S5 and S12 plays an important role in translational accuracy. The chain is Small ribosomal subunit protein uS4 from Limosilactobacillus reuteri (strain DSM 20016) (Lactobacillus reuteri).